We begin with the raw amino-acid sequence, 344 residues long: Protein pelota homolog (344 aa).

The protein belongs to the eukaryotic release factor 1 family. Pelota subfamily. As to quaternary structure, monomer. Requires a divalent metal cation as cofactor.

It is found in the cytoplasm. Functionally, may function in recognizing stalled ribosomes, interact with stem-loop structures in stalled mRNA molecules, and effect endonucleolytic cleavage of the mRNA. May play a role in the release non-functional ribosomes and degradation of damaged mRNAs. Has endoribonuclease activity. This is Protein pelota homolog from Saccharolobus islandicus (strain M.14.25 / Kamchatka #1) (Sulfolobus islandicus).